The following is a 132-amino-acid chain: Capsid protein (132 aa).

This sequence belongs to the Leviviricetes capsid protein family. In terms of assembly, homodimer. The capsid protein dimer binds to the viral RNA via an operator hairpin, but also many other RNA sequences in the viral genome.

It is found in the virion. Functionally, capsid protein self-assembles to form an icosahedral capsid with a T=3 symmetry, about 26 nm in diameter, and consisting of 89 capsid proteins dimers (178 capsid proteins). Involved in viral genome encapsidation through the interaction between a capsid protein dimer and the multiple packaging signals present in the RNA genome. Binding of the capsid proteins to the viral RNA induces a conformational change required for efficient T=3 shell formation. The capsid also contains 1 copy of the A2 maturation protein. Acts as a translational repressor of viral replicase synthesis late in infection. This latter function is the result of capsid protein interaction with an RNA hairpin which contains the replicase ribosome-binding site. The sequence is that of Capsid protein from Enterobacteria phage SP (Bacteriophage SP).